The sequence spans 150 residues: 3-hydroxyacyl-[acyl-carrier-protein] dehydratase FabZ (150 aa).

His-53 is a catalytic residue.

This sequence belongs to the thioester dehydratase family. FabZ subfamily.

The protein localises to the cytoplasm. The enzyme catalyses a (3R)-hydroxyacyl-[ACP] = a (2E)-enoyl-[ACP] + H2O. Its function is as follows. Involved in unsaturated fatty acids biosynthesis. Catalyzes the dehydration of short chain beta-hydroxyacyl-ACPs and long chain saturated and unsaturated beta-hydroxyacyl-ACPs. This is 3-hydroxyacyl-[acyl-carrier-protein] dehydratase FabZ from Photorhabdus laumondii subsp. laumondii (strain DSM 15139 / CIP 105565 / TT01) (Photorhabdus luminescens subsp. laumondii).